The primary structure comprises 381 residues: Transcriptional regulatory protein FlgR (381 aa).

A Response regulatory domain is found at 2-113 (KIAIVEDDIN…LLLESIYRTK (112 aa)). Asp-51 is subject to 4-aspartylphosphate. In terms of domain architecture, Sigma-54 factor interaction spans 136–365 (FLAASKALEE…LLGVVERAAI (230 aa)). ATP contacts are provided by residues 164 to 171 (GESGVGKE) and 227 to 236 (ANKGTIFLDE).

Post-translationally, phosphorylated by FlgS.

Its function is as follows. Member of the two-component regulatory system FlgR/FlgS that induces the transcriptional induction of the genes needed in motility and flagellar biogenesis. Upon phosphorylation by FlgS, functions as a transcriptional regulator and activates transcription of RpoN-dependent flagellar genes. The chain is Transcriptional regulatory protein FlgR (flgR) from Helicobacter pylori (strain ATCC 700392 / 26695) (Campylobacter pylori).